Reading from the N-terminus, the 101-residue chain is Isochorismate pyruvate lyase (101 aa).

In terms of domain architecture, Chorismate mutase spans 4–94; the sequence is PEDCTGLADI…WYIAEQIKYW (91 aa). Residues arginine 14, arginine 31, lysine 42, and glutamine 90 each coordinate substrate.

Dimer of dimers.

It catalyses the reaction isochorismate = salicylate + pyruvate. The enzyme catalyses chorismate = prephenate. It participates in siderophore biosynthesis; salicylate biosynthesis. With respect to regulation, inhibited by endo-oxabicyclic diacid resembling to the conformation of the transition state. Involved in the incorporation of salicylate into the siderophore pyochelin. Catalyzes the elimination of the enolpyruvyl side chain from isochorismate to yield salicylate and pyruvate via a rare pericyclic hydrogen transfer mechanism from C2 to C5. PchB also catalyzes the nonphysiological Claisen rearrangement of chorismate to prephenate in which the pyruvylenol tail is transferred from a C3 ether linkage to a C1-C9 linkage. The polypeptide is Isochorismate pyruvate lyase (Pseudomonas aeruginosa (strain ATCC 15692 / DSM 22644 / CIP 104116 / JCM 14847 / LMG 12228 / 1C / PRS 101 / PAO1)).